A 135-amino-acid polypeptide reads, in one-letter code: Protein PilG (135 aa).

Positions K9 to V125 constitute a Response regulatory domain. At D58 the chain carries 4-aspartylphosphate.

Post-translationally, phosphorylated.

Plays an essential role in both cAMP-dependent and independent regulation of twitching motility. Regulates the cAMP-independent coordination of type IV pilus (T4P) biogenesis and retraction that plays a role in surface and host cell adhesion, colonization, biofilm maturation, virulence, and twitching. In addition, phosphorylated PilG is necessary for cAMP production via regulation of the adenylate cyclase CyaB. Acts therefore as a response regulator of the chemosensory system/Chp system. The chain is Protein PilG (pilG) from Pseudomonas aeruginosa (strain ATCC 15692 / DSM 22644 / CIP 104116 / JCM 14847 / LMG 12228 / 1C / PRS 101 / PAO1).